A 661-amino-acid chain; its full sequence is Arginine--tRNA ligase, cytoplasmic (661 aa).

The tract at residues methionine 1–serine 72 is could be involved in the assembly of the multisynthetase complex. Residues serine 201–asparagine 203, histidine 212, tyrosine 385, aspartate 389, and glutamine 413 contribute to the L-arginine site. The short motif at proline 202–leucine 213 is the 'HIGH' region element. The tract at residues asparagine 530–alanine 544 is interaction with tRNA.

Belongs to the class-I aminoacyl-tRNA synthetase family. Monomer; also part of a multisubunit complex that groups tRNA ligases for Arg, Asp, Glu, Gln, Ile, Leu, Lys, Met and Pro.

The protein resides in the cytoplasm. Its subcellular location is the cytosol. The enzyme catalyses tRNA(Arg) + L-arginine + ATP = L-arginyl-tRNA(Arg) + AMP + diphosphate. Functionally, forms part of a macromolecular complex that catalyzes the attachment of specific amino acids to cognate tRNAs during protein synthesis. This is Arginine--tRNA ligase, cytoplasmic (RARS1) from Gallus gallus (Chicken).